The sequence spans 147 residues: Large ribosomal subunit protein uL16 (147 aa).

Belongs to the universal ribosomal protein uL16 family. Part of the 50S ribosomal subunit.

In terms of biological role, binds 23S rRNA and is also seen to make contacts with the A and possibly P site tRNAs. This is Large ribosomal subunit protein uL16 from Caldicellulosiruptor saccharolyticus (strain ATCC 43494 / DSM 8903 / Tp8T 6331).